The following is a 43-amino-acid chain: Photosystem I reaction center subunit IX (43 aa).

Residues 7–27 (YLSVAPVLSALWFGALAGLLI) form a helical membrane-spanning segment.

The protein belongs to the PsaJ family.

The protein localises to the plastid. It is found in the chloroplast thylakoid membrane. May help in the organization of the PsaE and PsaF subunits. The chain is Photosystem I reaction center subunit IX from Oenothera argillicola (Appalachian evening primrose).